Here is a 150-residue protein sequence, read N- to C-terminus: Endoribonuclease YbeY (150 aa).

Zn(2+) contacts are provided by histidine 102, histidine 106, and histidine 112.

Belongs to the endoribonuclease YbeY family. Requires Zn(2+) as cofactor.

The protein resides in the cytoplasm. Single strand-specific metallo-endoribonuclease involved in late-stage 70S ribosome quality control and in maturation of the 3' terminus of the 16S rRNA. This is Endoribonuclease YbeY from Thermotoga petrophila (strain ATCC BAA-488 / DSM 13995 / JCM 10881 / RKU-1).